The sequence spans 317 residues: Acetyl-coenzyme A carboxylase carboxyl transferase subunit alpha (317 aa).

The region spanning Thr-38 to Glu-292 is the CoA carboxyltransferase C-terminal domain.

It belongs to the AccA family. In terms of assembly, acetyl-CoA carboxylase is a heterohexamer composed of biotin carboxyl carrier protein (AccB), biotin carboxylase (AccC) and two subunits each of ACCase subunit alpha (AccA) and ACCase subunit beta (AccD).

It localises to the cytoplasm. The catalysed reaction is N(6)-carboxybiotinyl-L-lysyl-[protein] + acetyl-CoA = N(6)-biotinyl-L-lysyl-[protein] + malonyl-CoA. It participates in lipid metabolism; malonyl-CoA biosynthesis; malonyl-CoA from acetyl-CoA: step 1/1. Its function is as follows. Component of the acetyl coenzyme A carboxylase (ACC) complex. First, biotin carboxylase catalyzes the carboxylation of biotin on its carrier protein (BCCP) and then the CO(2) group is transferred by the carboxyltransferase to acetyl-CoA to form malonyl-CoA. The polypeptide is Acetyl-coenzyme A carboxylase carboxyl transferase subunit alpha (Oceanobacillus iheyensis (strain DSM 14371 / CIP 107618 / JCM 11309 / KCTC 3954 / HTE831)).